We begin with the raw amino-acid sequence, 246 residues long: MEVSHVTLAPNKDSRAAVLTIGKFDGVHIGHQTILNTALSIKKENEILTAISFSPHPLWALKQIEIYREMLTPRMEKERWLAYYGVNHLIETEFTSRYAETTPEEFVTDHLTNLNLSHIVVGSEFNFGKGRDSDVDLLRDLCKPYDIGVTSVPVIETNQTKISSTNIRAFIRRGHFQEAEELLGHPWYITGIVENGEMTGLDDYVLPATGTYQTDSGIVNVTNNRTIEVGLSDGLQQLHMKNELSE.

Belongs to the RibF family.

The catalysed reaction is FMN + ATP + H(+) = FAD + diphosphate. The protein operates within cofactor biosynthesis; FAD biosynthesis; FAD from FMN: step 1/1. Functionally, catalyzes the adenylation of flavin mononucleotide (FMN) to form flavin adenine dinucleotide (FAD) coenzyme. Can also catalyze, with lower efficiency, the adenylation of the toxic riboflavin analogs 8-demethyl-8-aminoriboflavin mononucleotide (AFMN) and roseoflavin mononucleotide (RoFMN) to 8-demethyl-8-aminoriboflavin adenine dinucleotide (AFAD) and roseoflavin adenine dinucleotide (RoFAD), respectively. The polypeptide is FAD synthetase (Listeria monocytogenes serovar 1/2a (strain ATCC BAA-679 / EGD-e)).